The primary structure comprises 482 residues: tRNA sulfurtransferase (482 aa).

The THUMP domain maps to 61 to 165 (VQICDALTRI…QDVLILVKAR (105 aa)). ATP is bound by residues 183–184 (LI), Lys-265, Gly-287, and Gln-296. Cys-344 and Cys-456 are joined by a disulfide. Residues 404-482 (FAPTDVLLDI…GFDNVKVYRP (79 aa)) form the Rhodanese domain. Cys-456 functions as the Cysteine persulfide intermediate in the catalytic mechanism.

The protein belongs to the ThiI family.

It localises to the cytoplasm. It carries out the reaction [ThiI sulfur-carrier protein]-S-sulfanyl-L-cysteine + a uridine in tRNA + 2 reduced [2Fe-2S]-[ferredoxin] + ATP + H(+) = [ThiI sulfur-carrier protein]-L-cysteine + a 4-thiouridine in tRNA + 2 oxidized [2Fe-2S]-[ferredoxin] + AMP + diphosphate. The catalysed reaction is [ThiS sulfur-carrier protein]-C-terminal Gly-Gly-AMP + S-sulfanyl-L-cysteinyl-[cysteine desulfurase] + AH2 = [ThiS sulfur-carrier protein]-C-terminal-Gly-aminoethanethioate + L-cysteinyl-[cysteine desulfurase] + A + AMP + 2 H(+). It participates in cofactor biosynthesis; thiamine diphosphate biosynthesis. Functionally, catalyzes the ATP-dependent transfer of a sulfur to tRNA to produce 4-thiouridine in position 8 of tRNAs, which functions as a near-UV photosensor. Also catalyzes the transfer of sulfur to the sulfur carrier protein ThiS, forming ThiS-thiocarboxylate. This is a step in the synthesis of thiazole, in the thiamine biosynthesis pathway. The sulfur is donated as persulfide by IscS. In Photorhabdus laumondii subsp. laumondii (strain DSM 15139 / CIP 105565 / TT01) (Photorhabdus luminescens subsp. laumondii), this protein is tRNA sulfurtransferase.